Reading from the N-terminus, the 279-residue chain is Tryptophan 2,3-dioxygenase (279 aa).

Substrate-binding positions include 48-52, Tyr110, and Arg114; that span reads FIVIH. Residue His237 participates in heme binding. Thr251 lines the substrate pocket.

It belongs to the tryptophan 2,3-dioxygenase family. Homotetramer. Heme serves as cofactor.

It catalyses the reaction L-tryptophan + O2 = N-formyl-L-kynurenine. The protein operates within amino-acid degradation; L-tryptophan degradation via kynurenine pathway; L-kynurenine from L-tryptophan: step 1/2. Functionally, heme-dependent dioxygenase that catalyzes the oxidative cleavage of the L-tryptophan (L-Trp) pyrrole ring and converts L-tryptophan to N-formyl-L-kynurenine. Catalyzes the oxidative cleavage of the indole moiety. This Exiguobacterium sibiricum (strain DSM 17290 / CCUG 55495 / CIP 109462 / JCM 13490 / 255-15) protein is Tryptophan 2,3-dioxygenase.